Here is a 295-residue protein sequence, read N- to C-terminus: Cyclic dipyrimidine nucleotide synthase CdnE (295 aa).

Residues 1-25 form a disordered region; it reads MSIDWEQTFRKWSKPSSETESTKAE. Residues Gln51, Ser53, and Asn59 each coordinate UTP. The Mg(2+) site is built by Asp65 and Asp67. 3 residues coordinate UTP: Asp67, Asp124, and Lys125. Asp128 and Asp139 together coordinate Mg(2+). Asp139, Asn173, Lys201, and Ser220 together coordinate UTP. The short motif at 274–276 is the Pyrimidine specificity motif (R/Q)xW in donor pocket element; it reads QMW.

Belongs to the CD-NTase family. E02 subfamily. Requires Mg(2+) as cofactor.

The catalysed reaction is 2 UTP = c-di-UMP + 2 diphosphate. It catalyses the reaction UTP + CTP = cyclic CMP-UMP + 2 diphosphate. Functionally, cyclic nucleotide synthase (second messenger synthase) of a CBASS antivirus system. CBASS (cyclic oligonucleotide-based antiphage signaling system) provides immunity against bacteriophage. The CD-NTase protein synthesizes cyclic nucleotides in response to infection; these serve as specific second messenger signals. The signals activate a diverse range of effectors, leading to bacterial cell death and thus abortive phage infection. A type I-B(UU) CBASS system. Cyclic dinucleotide synthase that catalyzes the synthesis of 3',3'-cyclic UMP-UMP (c-di-UMP) as the major product, and of 3',3'-cyclic CMP-UMP as a minor product, which are second messengers for cell signal transduction. The polypeptide is Cyclic dipyrimidine nucleotide synthase CdnE (Legionella pneumophila).